The following is a 592-amino-acid chain: Imidazole glycerol phosphate synthase hisHF, chloroplastic (592 aa).

A chloroplast-targeting transit peptide spans 1 to 55; it reads MEATAAPFSSIVSSRQNFSSSSSIRASSPASLFLSQKSIGNVNRKFKSPRSLSVR. The Glutamine amidotransferase type-1 domain maps to 63–271; the sequence is VVTLLDYGAG…LHPKLPATQK (209 aa). Catalysis depends on for GATase activity residues Cys-141, His-246, and Glu-248. Positions 280–592 are cyclase; it reads LAKRVIACLD…LQEERIEVRI (313 aa). Active-site residues include Asp-289 and Asp-447.

The protein in the C-terminal section; belongs to the HisA/HisF family.

It is found in the plastid. Its subcellular location is the chloroplast. The catalysed reaction is 5-[(5-phospho-1-deoxy-D-ribulos-1-ylimino)methylamino]-1-(5-phospho-beta-D-ribosyl)imidazole-4-carboxamide + L-glutamine = D-erythro-1-(imidazol-4-yl)glycerol 3-phosphate + 5-amino-1-(5-phospho-beta-D-ribosyl)imidazole-4-carboxamide + L-glutamate + H(+). The enzyme catalyses L-glutamine + H2O = L-glutamate + NH4(+). It participates in amino-acid biosynthesis; L-histidine biosynthesis; L-histidine from 5-phospho-alpha-D-ribose 1-diphosphate: step 5/9. Its function is as follows. IGPS catalyzes the conversion of PRFAR and glutamine to IGP, AICAR and glutamate. The glutaminase domain produces the ammonia necessary for the cyclase domain to produce IGP and AICAR from PRFAR. The ammonia is channeled to the active site of the cyclase domain. The protein is Imidazole glycerol phosphate synthase hisHF, chloroplastic (HISN4) of Arabidopsis thaliana (Mouse-ear cress).